Reading from the N-terminus, the 157-residue chain is Ribosomal RNA large subunit methyltransferase H (157 aa).

Residues L73, G105, and 124–129 each bind S-adenosyl-L-methionine; that span reads LSLMTF.

It belongs to the RNA methyltransferase RlmH family. In terms of assembly, homodimer.

It is found in the cytoplasm. It carries out the reaction pseudouridine(1915) in 23S rRNA + S-adenosyl-L-methionine = N(3)-methylpseudouridine(1915) in 23S rRNA + S-adenosyl-L-homocysteine + H(+). Functionally, specifically methylates the pseudouridine at position 1915 (m3Psi1915) in 23S rRNA. The polypeptide is Ribosomal RNA large subunit methyltransferase H (Flavobacterium johnsoniae (strain ATCC 17061 / DSM 2064 / JCM 8514 / BCRC 14874 / CCUG 350202 / NBRC 14942 / NCIMB 11054 / UW101) (Cytophaga johnsonae)).